The following is a 375-amino-acid chain: Probable L-tyrosine/L-aspartate decarboxylase (375 aa).

N6-(pyridoxal phosphate)lysine is present on K226.

The protein belongs to the group II decarboxylase family. MfnA subfamily. Pyridoxal 5'-phosphate is required as a cofactor.

The enzyme catalyses L-tyrosine + H(+) = tyramine + CO2. It catalyses the reaction L-aspartate + H(+) = beta-alanine + CO2. It participates in cofactor biosynthesis; methanofuran biosynthesis. The protein operates within cofactor biosynthesis; coenzyme A biosynthesis. Functionally, catalyzes the decarboxylation of L-tyrosine to produce tyramine for methanofuran biosynthesis. Can also catalyze the decarboxylation of L-aspartate to produce beta-alanine for coenzyme A (CoA) biosynthesis. This chain is Probable L-tyrosine/L-aspartate decarboxylase, found in Methanocella arvoryzae (strain DSM 22066 / NBRC 105507 / MRE50).